Here is a 119-residue protein sequence, read N- to C-terminus: NADH-quinone oxidoreductase subunit 7 (119 aa).

The next 3 membrane-spanning stretches (helical) occupy residues 11–31, 59–79, and 88–108; these read LIYV…GALL, VHFY…AFLW, and LGLY…VGFL.

Belongs to the complex I subunit 3 family. In terms of assembly, NDH-1 is composed of 15 different subunits, Nqo1 to Nqo15. The complex has a L-shaped structure, with the hydrophobic arm (subunits Nqo7, Nqo8 and Nqo10 to Nqo14) embedded in the membrane and the hydrophilic peripheral arm (subunits Nqo1 to Nqo6, Nqo9 and Nqo15) protruding into the bacterial cytoplasm. The hydrophilic domain contains all the redox centers.

The protein resides in the cell inner membrane. It catalyses the reaction a quinone + NADH + 5 H(+)(in) = a quinol + NAD(+) + 4 H(+)(out). Functionally, NDH-1 shuttles electrons from NADH, via FMN and iron-sulfur (Fe-S) centers, to quinones in the respiratory chain. The immediate electron acceptor for the enzyme in this species is menaquinone. Couples the redox reaction to proton translocation (for every two electrons transferred, four hydrogen ions are translocated across the cytoplasmic membrane), and thus conserves the redox energy in a proton gradient required for the synthesis of ATP. This Thermus thermophilus (strain ATCC 27634 / DSM 579 / HB8) protein is NADH-quinone oxidoreductase subunit 7 (nqo7).